The sequence spans 466 residues: Asparagine--tRNA ligase (466 aa).

This sequence belongs to the class-II aminoacyl-tRNA synthetase family. As to quaternary structure, homodimer.

The protein resides in the cytoplasm. The catalysed reaction is tRNA(Asn) + L-asparagine + ATP = L-asparaginyl-tRNA(Asn) + AMP + diphosphate + H(+). The chain is Asparagine--tRNA ligase from Shewanella halifaxensis (strain HAW-EB4).